The chain runs to 197 residues: MKTIAENWPPVRGDYVTGKPDSRIAVVTLASHLEAFPNAAIWGSSKTENLGVEKIIVNVISNSNIRYVLVCGTESRGHLAGHSLLAIHANGIDEKGRIVGSQGAIPFIENISREAVDRFQRQVTLLDRIGLNDPEEIRKIVEDYRDKGEVYPEEPVVVCAPKKRQASFAVPSSGDVIISEELVMDSMAGIICLAESL.

This sequence belongs to the MtrA family. May be part of a complex composed of 3 subunits; MtxA, MtxH and MtxX.

This chain is Putative methyltransferase Mtx subunit A (mtxA), found in Methanosarcina acetivorans (strain ATCC 35395 / DSM 2834 / JCM 12185 / C2A).